The chain runs to 103 residues: Pyrimidine/purine nucleoside phosphorylase (103 aa).

The protein belongs to the nucleoside phosphorylase PpnP family.

It catalyses the reaction a purine D-ribonucleoside + phosphate = a purine nucleobase + alpha-D-ribose 1-phosphate. It carries out the reaction adenosine + phosphate = alpha-D-ribose 1-phosphate + adenine. The catalysed reaction is cytidine + phosphate = cytosine + alpha-D-ribose 1-phosphate. The enzyme catalyses guanosine + phosphate = alpha-D-ribose 1-phosphate + guanine. It catalyses the reaction inosine + phosphate = alpha-D-ribose 1-phosphate + hypoxanthine. It carries out the reaction thymidine + phosphate = 2-deoxy-alpha-D-ribose 1-phosphate + thymine. The catalysed reaction is uridine + phosphate = alpha-D-ribose 1-phosphate + uracil. The enzyme catalyses xanthosine + phosphate = alpha-D-ribose 1-phosphate + xanthine. Its function is as follows. Catalyzes the phosphorolysis of diverse nucleosides, yielding D-ribose 1-phosphate and the respective free bases. Can use uridine, adenosine, guanosine, cytidine, thymidine, inosine and xanthosine as substrates. Also catalyzes the reverse reactions. This is Pyrimidine/purine nucleoside phosphorylase from Nocardia farcinica (strain IFM 10152).